The chain runs to 728 residues: Catalase B (728 aa).

Residues histidine 107 and asparagine 180 contribute to the active site. Tyrosine 394 is a binding site for heme.

This sequence belongs to the catalase family. Heme is required as a cofactor.

It localises to the secreted. The catalysed reaction is 2 H2O2 = O2 + 2 H2O. Functionally, occurs in almost all aerobically respiring organisms and serves to protect cells from the toxic effects of hydrogen peroxide. The sequence is that of Catalase B (CATB) from Ajellomyces capsulatus (Darling's disease fungus).